A 103-amino-acid polypeptide reads, in one-letter code: Large ribosomal subunit protein bL28 (103 aa).

Belongs to the bacterial ribosomal protein bL28 family.

The sequence is that of Large ribosomal subunit protein bL28 from Anaplasma marginale (strain St. Maries).